Reading from the N-terminus, the 466-residue chain is Ribulose bisphosphate carboxylase large chain (466 aa).

An N6,N6,N6-trimethyllysine modification is found at Lys-5. Substrate contacts are provided by Asn-114 and Thr-164. Lys-166 acts as the Proton acceptor in catalysis. Residue Lys-168 coordinates substrate. Lys-192, Asp-194, and Glu-195 together coordinate Mg(2+). The residue at position 192 (Lys-192) is an N6-carboxylysine. The active-site Proton acceptor is His-285. Substrate is bound by residues Arg-286, His-318, and Ser-370.

It belongs to the RuBisCO large chain family. Type I subfamily. In terms of assembly, heterohexadecamer of 8 large chains and 8 small chains; disulfide-linked. The disulfide link is formed within the large subunit homodimers. The cofactor is Mg(2+). The disulfide bond which can form in the large chain dimeric partners within the hexadecamer appears to be associated with oxidative stress and protein turnover.

The protein localises to the plastid. Its subcellular location is the chloroplast. It carries out the reaction 2 (2R)-3-phosphoglycerate + 2 H(+) = D-ribulose 1,5-bisphosphate + CO2 + H2O. The catalysed reaction is D-ribulose 1,5-bisphosphate + O2 = 2-phosphoglycolate + (2R)-3-phosphoglycerate + 2 H(+). In terms of biological role, ruBisCO catalyzes two reactions: the carboxylation of D-ribulose 1,5-bisphosphate, the primary event in carbon dioxide fixation, as well as the oxidative fragmentation of the pentose substrate in the photorespiration process. Both reactions occur simultaneously and in competition at the same active site. The sequence is that of Ribulose bisphosphate carboxylase large chain from Adoxa moschatellina (Moschatel).